A 149-amino-acid polypeptide reads, in one-letter code: MLMRSDPFRELDRFAHQVLGTAARPAVMPMDAWRQGEEFVVEFDLPGIDADSLDIDIERNVVTVRAERPALDPNREMLATERPRGVFSRQLVLGENLDTDKIQASYSEGVLSLHIPVAEKAKPRKIAVGRGDGHHAVAEGAAQREVINA.

The sHSP domain maps to 21-131 (TAARPAVMPM…KPRKIAVGRG (111 aa)).

Belongs to the small heat shock protein (HSP20) family.

Its function is as follows. Not known. This protein is one of the major immune reactive proteins in mycobacteria. In Mycobacterium intracellulare, this protein is 18 kDa antigen 1.